Here is a 64-residue protein sequence, read N- to C-terminus: Large ribosomal subunit protein uL30 (64 aa).

The interval 1–22 (MSEQVKRVRVTQVGSPIGRKPG) is disordered.

It belongs to the universal ribosomal protein uL30 family. As to quaternary structure, part of the 50S ribosomal subunit.

This Acidiphilium cryptum (strain JF-5) protein is Large ribosomal subunit protein uL30.